A 2171-amino-acid chain; its full sequence is MEDTQAIDWDVEEEEETEQSSESLRCNVEPVGRLHIFSGAHGPEKDFPLHLGKNVVGRMPDCSVALPFPSISKQHAEIEILAWDKAPILRDCGSLNGTQILRPPKVLSPGVSHRLRDQELILFADLLCQYHRLDVSLPFVSRGPLTVEETPRVQGGTQPQRLLLAEDSEEEVDFLSERRMVKKSRTTSSSVIVPESDEEGHSPVLGGLGPPFAFNLNSDTDVEEGQQPATEEASSAARRGATVEAKQSEAEVVTEIQLEKDQPLVKERDDDTKVKRGAENGVVPAGVILERSQPPGEDSDTDVDDDSRPPGRPAEVHLERAQPFGFINSDTDAEEERIPATPVVIPMKKRKIFHGVGTRGPGAPGLAHLQESQAGSDTDVEEGKAPQAVPLEKSQASMVINSDTDDEEEVSAALTLAHLKESQPAIWNRDAEEDMPQRVVLLQRSQTTTERDSDTDVEEEELPVENREAVLKDHTKIRALVRAHSEKDQPPFGDSDDSVEADKSSPGIHLERSQASTTVDINTQVEKEVPPGSAIIHIKKHQVSVEGTNQTDVKAVGGPAKLLVVSLEEAWPLHGDCETDAEEDTSLAASAVADVRKSQLPAEGDAGAEWAAAVLKQERAHEVGAQGGPPVAQVEQDLPISRENLTDLVVDTDTLGESTQPQREGAQVPTGREREQHVGGTKDSEDNYGDSEDLDLQATQCFLENQGLEAVQSMEDEPTQAFMLTPPQELGPSHCSFQTTGTLDEPWEVLATQPFCLRESEDSETQPFDTHLEAYGPCLSPPRAIPGDQHPESPVHTEPMGIQGRGRQTVDKVMGIPKETAERVGPERGPLERETEKLLPERQTDVTGEEELTKGKQDREQKQLLARDTQRQESDKNGESASPERDRESLKVEIETSEEIQEKQVQKQTLPSKAFEREVERPVANRECDPAELEEKVPKVILERDTQRGEPEGGSQDQKGQASSPIPEPGVEAGDLPGPTSAPVTSGSQSGGRGSPVSPRRHQKGLLNCKMPPAEKASRIRAAEKVSRGDQESPDACLPPTVPEAPAPPQKPLNSQSQKHLAPPPLLSPLLPSIKPTVRKTRQDGSQEAPEAPLSSELEPFHPKPKIRTRKSSRMTTFPATSAAPEPHPSTSTAQPVTPKPTSQATRSRTNRSSVKTPEQGVPTAPELQPCTSTDQPVTSEPTSQVTRGRKSRSSVKTPETVVPTALELQPSTSTDRPVTSEPTSHATRGRKNRSSVKTPEPVVPTAPELQPSTSTDQPVTSEPTYQATRGRKNRSSVKTPEPVVPTAPELQPSTSTDQPVTPKPTSRTTRSRTNMSSVKNPESTVPIAPELPPSTSTEQPVTPEPTSRATRGRKNRSSGKTPETLVPTAPKLEPSTSTDQPVTPEPTSQATRGRTNRSSVKTPETVVPTAPELQLSTSTDQAVTPKPTSRTTRSRTNMSSVKNPESTVPIAPELPPSTSTEQPVTPEPTSRATRGRKNRSSGKTPETLVPTAPKLEPSTSTDQPVTPEPTSQATRGRTNRSSVKTPETVVPTAPELQPSTSTDQPVTPEPTSQVTRGRTDRSSVKTPETVVPTAPELQASASTDQPVTSEPTSRTTRGRKNRSSVKTPETVVPTAPELQPSTSTDQPVTPEPTSQATRGRTNRSSVKTPESIVPIAPELQPSTSRNQLVTPEPTSRATRCRTNRSSVKTPEPVVPTAPEPHPTTSTDQPVTPKLTSRATRRKTNRSSVKTPKPVEPAASDLEPFTPTDQSVTPEAIAQGGQSKTLRSSTVRAMPVPTTPEFQSPVTTDQPISPEPITQPSCIKRQRAAGNPGSLAAPIDHKPCSAPLEPKSQASRNQRWGAVRAAESLTAIPEPASPQLLETPIHASQIQKVEPAGRSRFTPELQPKASQSRKRSLATMDSPPHQKQPQRGEVSQKTVIIKEEEEDTAEKPGKEEDVVTPKPGKRKRDQAEEEPNRIPSRSLRRTKLNQESTAPKVLFTGVVDARGERAVLALGGSLAGSAAEASHLVTDRIRRTVKFLCALGRGIPILSLDWLHQSHKAGFFLPPDEYVVTDPEQEKNFGFSLQDALSRARERRLLEGYEIYVTPGVQPPPPQMGEIISCCGGTYLPSMPRSYKPQRVVITCPQDFPHCSIPLRVGLPLLSPEFLLTGVLKQEAKPEAFVLSPLEMSST.

Positions 1–19 (MEDTQAIDWDVEEEEETEQ) are enriched in acidic residues. The disordered stretch occupies residues 1–22 (MEDTQAIDWDVEEEEETEQSSE). The segment at 1–150 (MEDTQAIDWD…SRGPLTVEET (150 aa)) is interaction with CHEK2. The interval 2 to 220 (EDTQAIDWDV…PFAFNLNSDT (219 aa)) is interaction with the MRN complex. A Phosphothreonine modification is found at T4. Residues 54–105 (NVVGRMPDCSVALPFPSISKQHAEIEILAWDKAPILRDCGSLNGTQILRPPK) form the FHA domain. Position 108 is a phosphoserine (S108). A required for nuclear localization (NLS1) region spans residues 145–568 (LTVEETPRVQ…PAKLLVVSLE (424 aa)). T146 carries the phosphothreonine modification. 4 positions are modified to phosphoserine: S168, S176, S196, and S218. Disordered regions lie at residues 185 to 248 (RTTS…AKQS) and 261 to 317 (DQPL…AEVH). The residue at position 220 (T220) is a Phosphothreonine. A compositionally biased stretch (basic and acidic residues) spans 261–278 (DQPLVKERDDDTKVKRGA). The residue at position 299 (S299) is a Phosphoserine. A Phosphothreonine modification is found at T301. Residues 306 to 317 (DSRPPGRPAEVH) show a composition bias toward basic and acidic residues. Phosphoserine is present on S329. T331 bears the Phosphothreonine mark. The segment at 355–387 (GVGTRGPGAPGLAHLQESQAGSDTDVEEGKAPQ) is disordered. A phosphoserine mark is found at S372 and S376. A Phosphothreonine modification is found at T378. Phosphoserine occurs at positions 394, 397, and 402. T404 is subject to Phosphothreonine. The residue at position 411 (S411) is a Phosphoserine. Disordered regions lie at residues 443–469 (QRSQ…NREA) and 481–522 (VRAH…VDIN). The residue at position 449 (T449) is a Phosphothreonine. The residue at position 453 (S453) is a Phosphoserine. T455 carries the post-translational modification Phosphothreonine. Phosphoserine occurs at positions 485, 495, 498, 504, 505, and 513. Residues 513 to 522 (SQASTTVDIN) show a composition bias toward polar residues. A Phosphothreonine modification is found at T523. Position 590 is a phosphoserine (S590). K616 is covalently cross-linked (Glycyl lysine isopeptide (Lys-Gly) (interchain with G-Cter in SUMO1); alternate). Residue K616 forms a Glycyl lysine isopeptide (Lys-Gly) (interchain with G-Cter in SUMO2); alternate linkage. 2 disordered regions span residues 653–689 (DTLG…DNYG) and 780–1969 (SPPR…TKLN). Basic and acidic residues predominate over residues 671-685 (GREREQHVGGTKDSE). A phosphoserine mark is found at S780 and S793. Position 812 is an N6-acetyllysine (K812). Basic and acidic residues-rich tracts occupy residues 819–844 (ETAE…ERQT), 851–862 (ELTKGKQDREQK), 868–905 (DTQR…EKQV), and 914–951 (AFER…RGEP). 2 positions are modified to phosphoserine: S955 and S998. Over residues 955 to 964 (SQDQKGQASS) the composition is skewed to polar residues. The segment covering 1016 to 1031 (KASRIRAAEKVSRGDQ) has biased composition (basic and acidic residues). S1033 carries the phosphoserine modification. Positions 1040-1051 (PTVPEAPAPPQK) are enriched in pro residues. Phosphoserine occurs at positions 1068 and 1086. The span at 1103-1113 (PKPKIRTRKSS) shows a compositional bias: basic residues. Composition is skewed to polar residues over residues 1129 to 1157 (PSTS…SVKT) and 1170 to 1187 (PCTS…SQVT). Residues 1148-1692 (SRTNRSSVKT…TNRSSVKTPE (545 aa)) form an interaction with the PRKDC complex region. Residue T1157 is modified to Phosphothreonine. T1198 is modified (phosphothreonine). The segment covering 1210–1227 (QPSTSTDRPVTSEPTSHA) has biased composition (polar residues). At S1235 the chain carries Phosphoserine. At T1239 the chain carries Phosphothreonine. The span at 1251-1268 (QPSTSTDQPVTSEPTYQA) shows a compositional bias: polar residues. A phosphothreonine mark is found at T1280 and T1302. Residues 1306–1318 (TSRTTRSRTNMSS) show a composition bias toward low complexity. Polar residues-rich tracts occupy residues 1334–1350 (PSTS…TSRA) and 1375–1403 (PSTS…SVKT). A compositionally biased stretch (low complexity) spans 1429-1441 (TSRTTRSRTNMSS). Residues 1457–1473 (PSTSTEQPVTPEPTSRA) show a composition bias toward polar residues. Residues S1481 and S1482 each carry the phosphoserine modification. The residue at position 1484 (K1484) is an N6-acetyllysine. A Phosphothreonine modification is found at T1485. K1495 is covalently cross-linked (Glycyl lysine isopeptide (Lys-Gly) (interchain with G-Cter in SUMO1); alternate). A Glycyl lysine isopeptide (Lys-Gly) (interchain with G-Cter in SUMO2); alternate cross-link involves residue K1495. Composition is skewed to polar residues over residues 1498 to 1526 (PSTS…SVKT), 1538 to 1557 (QPST…QVTR), and 1580 to 1596 (ASAS…TSRT). Phosphothreonine occurs at positions 1507 and 1548. A phosphothreonine mark is found at T1615 and T1630. Polar residues-rich tracts occupy residues 1620–1649 (QPST…SVKT) and 1661–1678 (QPST…TSRA). S1646 is subject to Phosphoserine. Phosphothreonine occurs at positions 1649 and 1671. Position 1686 is a phosphoserine (S1686). A Phosphothreonine modification is found at T1690. A compositionally biased stretch (pro residues) spans 1693–1702 (PVVPTAPEPH). Residues 1706-1718 (STDQPVTPKLTSR) show a composition bias toward polar residues. T1712, T1746, and T1753 each carry phosphothreonine. Residues 1760 to 1771 (GGQSKTLRSSTV) are compositionally biased toward polar residues. S1763 is subject to Phosphoserine. T1779 is modified (phosphothreonine). Polar residues predominate over residues 1780–1801 (PEFQSPVTTDQPISPEPITQPS). The tract at residues 1780 to 2171 (PEFQSPVTTD…VLSPLEMSST (392 aa)) is required for nuclear localization (NLS2). Phosphoserine is present on residues S1784 and S1793. A Glycyl lysine isopeptide (Lys-Gly) (interchain with G-Cter in SUMO2) cross-link involves residue K1822. S1857 carries the post-translational modification Phosphoserine. A Glycyl lysine isopeptide (Lys-Gly) (interchain with G-Cter in SUMO2) cross-link involves residue K1872. T1882 is subject to Phosphothreonine. At S1902 the chain carries Phosphoserine. Over residues 1905 to 1918 (HQKQPQRGEVSQKT) the composition is skewed to polar residues. K1922 is covalently cross-linked (Glycyl lysine isopeptide (Lys-Gly) (interchain with G-Cter in SUMO1); alternate). Residue K1922 forms a Glycyl lysine isopeptide (Lys-Gly) (interchain with G-Cter in SUMO2); alternate linkage. Residues 1929–1939 (AEKPGKEEDVV) show a composition bias toward basic and acidic residues. T1940 carries the phosphothreonine modification. 2 consecutive BRCT domains span residues 1974–2052 (APKV…EYVV) and 2073–2164 (RERR…FVLS). Position 2025 is an omega-N-methylarginine (R2025).

Homodimer. Interacts with H2AX, which requires phosphorylation of H2AX on 'Ser-139'. Interacts with the MRN complex, composed of MRE11, RAD50, and NBN. Interacts with CHEK2, which requires ATM-mediated phosphorylation of 'Thr-68' within the FHA domain of CHEK2. Interacts constitutively with the BRCA1-BARD1 complex, SMC1A and TP53BP1. Interacts with ATM and FANCD2, and these interactions are reduced upon DNA damage. Also interacts with the PRKDC complex, composed of XRCC6/KU70, XRCC5/KU80 and PRKDC/XRCC7. This interaction may be required for PRKDC autophosphorylation, which is essential for DNA double strand break (DSB) repair. When phosphorylated by ATM, interacts with RNF8 (via FHA domain). Interacts with CEP164. When phosphorylated, interacts with APTX (via FHA-like domain). Interacts (when phosphorylated) with TOPBP1; promoting TOPBP1 localization to DNA damage sites during mitosis. Interacts (when phosphorylated) with NBN; promoting NBN and MRN complex localization to DNA damage sites. Post-translationally, phosphorylated upon exposure to ionizing radiation (IR), ultraviolet radiation (UV), and hydroxyurea (HU). Phosphorylation in response to IR requires ATM, NBN, and possibly CHEK2. Also phosphorylated during the G2/M phase of the cell cycle and during activation of the mitotic spindle checkpoint. Phosphorylation at Thr-4 by ATM stabilizes and enhances homodimerization via the FHA domain. Phosphorylated at Ser-168 and Ser-196 by CK2 in response to DNA damage during mitosis, promoting interaction with TOPBP1. Phosphorylated by CK2 in response to DNA damage, promoting interaction with NBN and recruitment of the MRN complex to DNA damage sites. In terms of processing, sumoylation at Lys-1922 by PIAS4 following DNA damage promotes ubiquitin-mediated degradation. Ubiquitinated by RNF4, leading to proteasomal degradation; undergoes 'Lys-48'-linked polyubiquitination.

The protein resides in the nucleus. It is found in the chromosome. In terms of biological role, histone reader protein required for checkpoint-mediated cell cycle arrest in response to DNA damage within both the S phase and G2/M phases of the cell cycle. Specifically recognizes and binds histone H2AX phosphorylated at 'Ser-139', a marker of DNA damage, serving as a scaffold for the recruitment of DNA repair and signal transduction proteins to discrete foci of DNA damage sites. Also required for downstream events subsequent to the recruitment of these proteins. These include phosphorylation and activation of the ATM, CHEK1 and CHEK2 kinases, and stabilization of TP53/p53 and apoptosis. ATM and CHEK2 may also be activated independently by a parallel pathway mediated by TP53BP1. Required for chromosomal stability during mitosis by promoting recruitment of TOPBP1 to DNA double strand breaks (DSBs): TOPBP1 forms filamentous assemblies that bridge MDC1 and tether broken chromosomes during mitosis. Required for the repair of DSBs via homologous recombination by promoting recruitment of NBN component of the MRN complex to DSBs. The sequence is that of Mediator of DNA damage checkpoint protein 1 (MDC1) from Pan troglodytes (Chimpanzee).